Reading from the N-terminus, the 365-residue chain is DNA replication and repair protein RecF (365 aa).

Residue 30–37 participates in ATP binding; the sequence is GANGQGKT.

Belongs to the RecF family.

Its subcellular location is the cytoplasm. The RecF protein is involved in DNA metabolism; it is required for DNA replication and normal SOS inducibility. RecF binds preferentially to single-stranded, linear DNA. It also seems to bind ATP. In Geobacter sulfurreducens (strain ATCC 51573 / DSM 12127 / PCA), this protein is DNA replication and repair protein RecF.